A 235-amino-acid polypeptide reads, in one-letter code: Aspartate/glutamate leucyltransferase (235 aa).

This sequence belongs to the R-transferase family. Bpt subfamily.

It localises to the cytoplasm. The enzyme catalyses N-terminal L-glutamyl-[protein] + L-leucyl-tRNA(Leu) = N-terminal L-leucyl-L-glutamyl-[protein] + tRNA(Leu) + H(+). It carries out the reaction N-terminal L-aspartyl-[protein] + L-leucyl-tRNA(Leu) = N-terminal L-leucyl-L-aspartyl-[protein] + tRNA(Leu) + H(+). Functionally, functions in the N-end rule pathway of protein degradation where it conjugates Leu from its aminoacyl-tRNA to the N-termini of proteins containing an N-terminal aspartate or glutamate. The protein is Aspartate/glutamate leucyltransferase of Pseudomonas aeruginosa (strain LESB58).